A 439-amino-acid chain; its full sequence is Probable E3 ubiquitin-protein ligase makorin-1 (439 aa).

3 consecutive C3H1-type zinc fingers follow at residues 18–45 (WTKH…HDLS), 48–74 (KQTM…HTKP), and 163–190 (EMKK…HGDV). Residues 73–118 (KPSKQDEVPSSKPSMPLTAAPLAGTPEPVSDGPGGTTGAQEKPQGS) form a disordered region. Residues 191-218 (CDMCGLQVLHPSDTSQRSQHIRACIEAH) are makorin-type Cys-His. The segment at 236–290 (CGVCMEVVFEKTNPSERRFGILSNCCHCYCLKCIRKWRSAKQFESKIIKSCPECR) adopts an RING-type zinc-finger fold. The C3H1-type 4 zinc finger occupies 319-348 (GMGTKPCRYFDEGRGTCPFGANCFYKHAFP). The disordered stretch occupies residues 352–371 (LEEPQPQRRQNGSNGRNRNT). Positions 358–368 (QRRQNGSNGRN) are enriched in low complexity.

It carries out the reaction S-ubiquitinyl-[E2 ubiquitin-conjugating enzyme]-L-cysteine + [acceptor protein]-L-lysine = [E2 ubiquitin-conjugating enzyme]-L-cysteine + N(6)-ubiquitinyl-[acceptor protein]-L-lysine.. Its pathway is protein modification; protein ubiquitination. Its function is as follows. E3 ubiquitin ligase catalyzing the covalent attachment of ubiquitin moieties onto substrate proteins. The protein is Probable E3 ubiquitin-protein ligase makorin-1 of Danio rerio (Zebrafish).